Here is a 297-residue protein sequence, read N- to C-terminus: Glutamyl-Q tRNA(Asp) synthetase (297 aa).

L-glutamate is bound by residues 9–13 and glutamate 45; that span reads RFAPS. The short motif at 12–22 is the 'HIGH' region element; sequence PSPTGPLHFGS. The Zn(2+) site is built by cysteine 101, cysteine 103, and cysteine 118. L-glutamate-binding residues include tyrosine 170 and arginine 188. The short motif at 226 to 230 is the 'KMSKS' region element; sequence KLSKS. Lysine 229 contacts ATP.

It belongs to the class-I aminoacyl-tRNA synthetase family. GluQ subfamily. The cofactor is Zn(2+).

Catalyzes the tRNA-independent activation of glutamate in presence of ATP and the subsequent transfer of glutamate onto a tRNA(Asp). Glutamate is transferred on the 2-amino-5-(4,5-dihydroxy-2-cyclopenten-1-yl) moiety of the queuosine in the wobble position of the QUC anticodon. This Xanthomonas campestris pv. campestris (strain 8004) protein is Glutamyl-Q tRNA(Asp) synthetase.